A 36-amino-acid chain; its full sequence is Photosystem I reaction center subunit VIII (36 aa).

A helical membrane pass occupies residues 7-29 (PSILVPLVGLVFPAITLASLFIY).

Belongs to the PsaI family.

It is found in the plastid. It localises to the chloroplast thylakoid membrane. Its function is as follows. May help in the organization of the PsaL subunit. This is Photosystem I reaction center subunit VIII from Anthoceros angustus (Hornwort).